The primary structure comprises 652 residues: Acetyl-coenzyme A synthetase (652 aa).

Residues 191–194 (RAGR), T311, and N335 contribute to the CoA site. Residues 387–389 (GEP), 411–416 (DTWWQT), D500, and R515 each bind ATP. S523 is a binding site for CoA. R526 contributes to the ATP binding site. Mg(2+)-binding residues include V537, H539, and I542. CoA is bound at residue R584. At K609 the chain carries N6-acetyllysine.

The protein belongs to the ATP-dependent AMP-binding enzyme family. Requires Mg(2+) as cofactor. Post-translationally, acetylated. Deacetylation by the SIR2-homolog deacetylase activates the enzyme.

The catalysed reaction is acetate + ATP + CoA = acetyl-CoA + AMP + diphosphate. Catalyzes the conversion of acetate into acetyl-CoA (AcCoA), an essential intermediate at the junction of anabolic and catabolic pathways. Acs undergoes a two-step reaction. In the first half reaction, Acs combines acetate with ATP to form acetyl-adenylate (AcAMP) intermediate. In the second half reaction, it can then transfer the acetyl group from AcAMP to the sulfhydryl group of CoA, forming the product AcCoA. In terms of biological role, enables the cell to use acetate during aerobic growth to generate energy via the TCA cycle, and biosynthetic compounds via the glyoxylate shunt. Acetylates CheY, the response regulator involved in flagellar movement and chemotaxis. This is Acetyl-coenzyme A synthetase from Citrobacter koseri (strain ATCC BAA-895 / CDC 4225-83 / SGSC4696).